The sequence spans 156 residues: uncharacterized protein (156 aa).

The next 3 membrane-spanning stretches (helical) occupy residues 21–41 (GVLFSSFALLFMFFNSLAISL), 54–74 (TICSSLIPCRTLIFSLWIDFA), and 80–100 (SVLVCCFSASLPLVFFFWALF).

It localises to the membrane. This is an uncharacterized protein from Saccharomyces cerevisiae (strain ATCC 204508 / S288c) (Baker's yeast).